Consider the following 259-residue polypeptide: Ribonuclease HII (259 aa).

One can recognise an RNase H type-2 domain in the interval 70 to 258 (TLIVGIDEVG…VKSLVLGKKE (189 aa)). Residues aspartate 76, glutamate 77, and aspartate 168 each coordinate a divalent metal cation.

The protein belongs to the RNase HII family. Mn(2+) serves as cofactor. Requires Mg(2+) as cofactor.

Its subcellular location is the cytoplasm. The catalysed reaction is Endonucleolytic cleavage to 5'-phosphomonoester.. Endonuclease that specifically degrades the RNA of RNA-DNA hybrids. The protein is Ribonuclease HII of Streptococcus pneumoniae serotype 2 (strain D39 / NCTC 7466).